A 290-amino-acid chain; its full sequence is MQPTVIETWPAPAKLNLFLYITGQRQDGYHLLQTLFQFLDYGDTLTIQPRDDDQINLLTPVDGVENEQNLIVRAARLLQQHCKRHNIHPAQFGADIRIDKYLPMGGGLGGGSSNAATVLVALNHLWKSGLSVDTLADLGLQLGADVPVFVRGHAAFAEGIGERLTPANPPEKWYLVAHPGVSIATPLIFGDPELTRNSPVRDLETLLNQTFVNDCEAIARKRFREVEQLLSWLLEYAPARLTGTGACVFAEFDTEFAARQVLDQAPEWLNGFVARGVNVSPLQRTLSGQL.

K14 is an active-site residue. ATP is bound at residue 103 to 113 (PMGGGLGGGSS). The active site involves D145.

Belongs to the GHMP kinase family. IspE subfamily. Homodimer.

It carries out the reaction 4-CDP-2-C-methyl-D-erythritol + ATP = 4-CDP-2-C-methyl-D-erythritol 2-phosphate + ADP + H(+). It functions in the pathway isoprenoid biosynthesis; isopentenyl diphosphate biosynthesis via DXP pathway; isopentenyl diphosphate from 1-deoxy-D-xylulose 5-phosphate: step 3/6. Functionally, catalyzes the phosphorylation of the position 2 hydroxy group of 4-diphosphocytidyl-2C-methyl-D-erythritol. This is 4-diphosphocytidyl-2-C-methyl-D-erythritol kinase from Pectobacterium carotovorum subsp. carotovorum (strain PC1).